A 113-amino-acid polypeptide reads, in one-letter code: Ig kappa chain V-II region 17S29.1 (113 aa).

Residues 1 to 23 (DIVMTQAVFSNPVTLGTSASISC) form a framework-1 region. A disulfide bond links cysteine 23 and cysteine 93. The complementarity-determining-1 stretch occupies residues 24 to 39 (RSSKSLLHSNGITYLY). The framework-2 stretch occupies residues 40–54 (WYLQKPGQSPQLLLY). The segment at 55 to 61 (QMSNLAS) is complementarity-determining-2. The interval 62-93 (GVPDRFSSSGSGTDFTLRISRVEAEDVGVYYC) is framework-3. The interval 94–102 (AHNLELPYT) is complementarity-determining-3. The segment at 103 to 112 (FGGGTKLEIK) is framework-4.

Anti-streptococcal group A carbohydrate antibody. This Mus musculus (Mouse) protein is Ig kappa chain V-II region 17S29.1.